Here is a 790-residue protein sequence, read N- to C-terminus: MSRFFVSGYNSESSSEEEDLLSSEEELLTSSGEENEDSDFFNDDDESSSDEEDGRPSGPAYFLKKSFLKGAGGDSDSDSDDEGRKVVKSAKEKLLDDMKASIEVINVNKRTNNWIVVLSEFEKLGKLINRANQQNFGTPKFYVKLLASLDDSITETVNNEKDDKTMKADEARAFNTLRQRVKKQIKEFQVYFDLYKDVPENFDQEDESLDSFAKNQETREETRTLSPIFHNLKLINESRGKKNIDKSEQVTTLEGLISDEASDFELISLYQSLLSVRFDASSNQSFMAIQDWRSNKRDLNNLLDILVKSKVYQLSEEGQTTDDIDIEPTANEDGVKVIYGSVTSLIDRLDDEFTKSLQNTDPHSMEYVERLKDETEIYNLIVRGQAYIESIVADKQQSNQLARVVLRRLEHIYYKPNQLIKANEEEAWKNIKPSTQTPSEVIESLTQFLQSNKVFAKQALLYSIYYYAVNGDYNKAKELFLSAHFNLSDSALQVSYNRALVQLGLSAFRSGAIEESHKILNEMVNSQRSKELLGQGFNSKFPNQATVVEKQRLLPFHQHINLELLECVYMTCSLLIEIPALASNKDPKRRNASLKSFKSKLEFHDRQYFTGPPESIKDHIVHASIALQKGDWSKAYNLLSSIKIWHLFPDHDNLLAMMKNQLQIEGLRTYIFTYKAVYSKLSISKLSSIFGLLQENVSEVLTQMIEKLDINGEVSGDYIVFTTDSQRSKLQELAIVMNDKIQLLTEKNEKTSSNGYAKKNQSQTQPQAQSKEVEENKFRYANVNTNTDEF.

The interval 1–62 (MSRFFVSGYN…DGRPSGPAYF (62 aa)) is disordered. Acidic residues predominate over residues 14 to 53 (SSEEEDLLSSEEELLTSSGEENEDSDFFNDDDESSSDEED). Residues 556–728 (FHQHINLELL…IVFTTDSQRS (173 aa)) enclose the PCI domain. The interval 748 to 790 (NEKTSSNGYAKKNQSQTQPQAQSKEVEENKFRYANVNTNTDEF) is disordered. Residues 751–770 (TSSNGYAKKNQSQTQPQAQS) are compositionally biased toward polar residues.

It belongs to the eIF-3 subunit C family. As to quaternary structure, component of the eukaryotic translation initiation factor 3 (eIF-3) complex.

Its subcellular location is the cytoplasm. Its function is as follows. Component of the eukaryotic translation initiation factor 3 (eIF-3) complex, which is involved in protein synthesis of a specialized repertoire of mRNAs and, together with other initiation factors, stimulates binding of mRNA and methionyl-tRNAi to the 40S ribosome. The eIF-3 complex specifically targets and initiates translation of a subset of mRNAs involved in cell proliferation. This is Eukaryotic translation initiation factor 3 subunit C from Lodderomyces elongisporus (strain ATCC 11503 / CBS 2605 / JCM 1781 / NBRC 1676 / NRRL YB-4239) (Yeast).